Here is a 494-residue protein sequence, read N- to C-terminus: Putative NAD kinase 3 (494 aa).

Belongs to the NAD kinase family.

The catalysed reaction is NAD(+) + ATP = ADP + NADP(+) + H(+). The sequence is that of Putative NAD kinase 3 from Oryza sativa subsp. japonica (Rice).